A 357-amino-acid polypeptide reads, in one-letter code: 5-hydroxytryptamine receptor 5A (357 aa).

At 1–36 (MDLPVNLTSFSLSTPSPLETNHSLGKDDLRPSSPLL) the chain is on the extracellular side. Asn6 and Asn21 each carry an N-linked (GlcNAc...) asparagine glycan. A helical membrane pass occupies residues 37 to 63 (SVFGVLILTLLGFLVAATFAWNLLVLA). At 64 to 76 (TILRVRTFHRVPH) the chain is on the cytoplasmic side. The helical transmembrane segment at 77-103 (NLVASMAVSDVLVAALVMPLSLVHELS) threads the bilayer. At 104-114 (GRRWQLGRRLC) the chain is on the extracellular side. Cys114 and Cys192 are disulfide-bonded. The chain crosses the membrane as a helical span at residues 115–137 (QLWIACDVLCCTASIWNVTAIAL). Asp121 contacts serotonin. The Cytoplasmic portion of the chain corresponds to 138 to 155 (DRYWSITRHMEYTLRTRK). A helical membrane pass occupies residues 156 to 176 (CVSNVMIALTWALSAVISLAP). The Extracellular segment spans residues 177–198 (LLFGWGETYSEGSEECQVSREP). The chain crosses the membrane as a helical span at residues 199 to 220 (SYAVFSTVGAFYLPLCVVLFVY). The Cytoplasmic segment spans residues 221–287 (WKIYKAAKFR…QKEQRAALMV (67 aa)). A helical membrane pass occupies residues 288-312 (GILIGVFVLCWIPFFLTELISPLCS). Residues 313–314 (CD) are Extracellular-facing. Residues 315–339 (IPAIWKSIFLWLGYSNSFFNPLIYT) form a helical membrane-spanning segment. Topologically, residues 340–357 (AFNKNYNSAFKNFFSRQH) are cytoplasmic.

The protein belongs to the G-protein coupled receptor 1 family.

It localises to the cell membrane. G-protein coupled receptor for 5-hydroxytryptamine (serotonin), a biogenic hormone that functions as a neurotransmitter, a hormone and a mitogen. Also functions as a receptor for ergot alkaloid derivatives and other psychoactive substances. Ligand binding causes a conformation change that triggers signaling via guanine nucleotide-binding proteins (G proteins) and modulates the activity of downstream effectors. HTR5A is coupled to G(i)/G(o) G alpha proteins and mediates inhibitory neurotransmission: signaling inhibits adenylate cyclase activity and activates a phosphatidylinositol-calcium second messenger system that regulates the release of Ca(2+) ions from intracellular stores. This chain is 5-hydroxytryptamine receptor 5A, found in Homo sapiens (Human).